We begin with the raw amino-acid sequence, 275 residues long: Large ribosomal subunit protein uL2 (275 aa).

2 disordered regions span residues 34–59 (LEKK…GGHK) and 223–275 (VAMN…RNKK).

The protein belongs to the universal ribosomal protein uL2 family. As to quaternary structure, part of the 50S ribosomal subunit. Forms a bridge to the 30S subunit in the 70S ribosome.

In terms of biological role, one of the primary rRNA binding proteins. Required for association of the 30S and 50S subunits to form the 70S ribosome, for tRNA binding and peptide bond formation. It has been suggested to have peptidyltransferase activity; this is somewhat controversial. Makes several contacts with the 16S rRNA in the 70S ribosome. The sequence is that of Large ribosomal subunit protein uL2 from Teredinibacter turnerae (strain ATCC 39867 / T7901).